Here is a 412-residue protein sequence, read N- to C-terminus: B3 domain-containing protein Os02g0683500 (412 aa).

Residues 1–87 (MEFTTSSRFS…GGGGGGGGEA (87 aa)) form a disordered region. The segment covering 30 to 65 (TATAEAAPAPTSSSSSPAHHAASASASASASGSSTP) has biased composition (low complexity). Residues 73–86 (GASGSGGGGGGGGE) show a composition bias toward gly residues. Residues 96–200 (FDKVVTPSDV…RHRLFIDWKR (105 aa)) constitute a DNA-binding region (TF-B3). The interval 374–412 (RLLELPPHHHHGAESSAASSPSSSSSSKRDAHSALDLDL) is disordered. Low complexity predominate over residues 387-399 (ESSAASSPSSSSS). Residues 400 to 412 (SKRDAHSALDLDL) show a composition bias toward basic and acidic residues.

The protein localises to the nucleus. The protein is B3 domain-containing protein Os02g0683500 of Oryza sativa subsp. japonica (Rice).